The sequence spans 448 residues: tRNA wybutosine-synthesizing protein 2 homolog (448 aa).

S-adenosyl-L-methionine is bound by residues serine 218, lysine 225, glutamate 265, and aspartate 293–asparagine 294.

Belongs to the class I-like SAM-binding methyltransferase superfamily. TRM5/TYW2 family.

It catalyses the reaction 4-demethylwyosine(37) in tRNA(Phe) + S-adenosyl-L-methionine = 4-demethyl-7-[(3S)-3-amino-3-carboxypropyl]wyosine(37) in tRNA(Phe) + S-methyl-5'-thioadenosine + H(+). Its pathway is tRNA modification; wybutosine-tRNA(Phe) biosynthesis. In terms of biological role, S-adenosyl-L-methionine-dependent transferase that acts as a component of the wybutosine biosynthesis pathway. Wybutosine is a hyper modified guanosine with a tricyclic base found at the 3'-position adjacent to the anticodon of eukaryotic phenylalanine tRNA. Catalyzes the transfer of the alpha-amino-alpha-carboxypropyl (acp) group from S-adenosyl-L-methionine to the C-7 position of 4-demethylwyosine (imG-14) to produce wybutosine-86. This chain is tRNA wybutosine-synthesizing protein 2 homolog (TRMT12), found in Homo sapiens (Human).